The sequence spans 311 residues: Methionyl-tRNA formyltransferase (311 aa).

109–112 (SLLP) serves as a coordination point for (6S)-5,6,7,8-tetrahydrofolate.

The protein belongs to the Fmt family.

It catalyses the reaction L-methionyl-tRNA(fMet) + (6R)-10-formyltetrahydrofolate = N-formyl-L-methionyl-tRNA(fMet) + (6S)-5,6,7,8-tetrahydrofolate + H(+). In terms of biological role, attaches a formyl group to the free amino group of methionyl-tRNA(fMet). The formyl group appears to play a dual role in the initiator identity of N-formylmethionyl-tRNA by promoting its recognition by IF2 and preventing the misappropriation of this tRNA by the elongation apparatus. The chain is Methionyl-tRNA formyltransferase from Marinobacter nauticus (strain ATCC 700491 / DSM 11845 / VT8) (Marinobacter aquaeolei).